A 142-amino-acid polypeptide reads, in one-letter code: SsrA-binding protein (142 aa).

It belongs to the SmpB family.

The protein resides in the cytoplasm. Required for rescue of stalled ribosomes mediated by trans-translation. Binds to transfer-messenger RNA (tmRNA), required for stable association of tmRNA with ribosomes. tmRNA and SmpB together mimic tRNA shape, replacing the anticodon stem-loop with SmpB. tmRNA is encoded by the ssrA gene; the 2 termini fold to resemble tRNA(Ala) and it encodes a 'tag peptide', a short internal open reading frame. During trans-translation Ala-aminoacylated tmRNA acts like a tRNA, entering the A-site of stalled ribosomes, displacing the stalled mRNA. The ribosome then switches to translate the ORF on the tmRNA; the nascent peptide is terminated with the 'tag peptide' encoded by the tmRNA and targeted for degradation. The ribosome is freed to recommence translation, which seems to be the essential function of trans-translation. This is SsrA-binding protein from Mycoplasma mobile (strain ATCC 43663 / 163K / NCTC 11711) (Mesomycoplasma mobile).